The primary structure comprises 235 residues: Thiamine import ATP-binding protein ThiQ (235 aa).

The region spanning 2–230 (LKLENLTYRY…TVPEAAILGM (229 aa)) is the ABC transporter domain. 32-39 (GPSGAGKS) provides a ligand contact to ATP.

This sequence belongs to the ABC transporter superfamily. Thiamine importer (TC 3.A.1.19.1) family. The complex is composed of two ATP-binding proteins (ThiQ), two transmembrane proteins (ThiP) and a solute-binding protein (ThiB).

The protein resides in the cell inner membrane. It catalyses the reaction thiamine(out) + ATP + H2O = thiamine(in) + ADP + phosphate + H(+). Its function is as follows. Part of the ABC transporter complex ThiBPQ involved in thiamine import. Responsible for energy coupling to the transport system. The sequence is that of Thiamine import ATP-binding protein ThiQ from Photorhabdus laumondii subsp. laumondii (strain DSM 15139 / CIP 105565 / TT01) (Photorhabdus luminescens subsp. laumondii).